Here is a 548-residue protein sequence, read N- to C-terminus: Membrane protein insertase YidC (548 aa).

A helical membrane pass occupies residues 6-26 (NLLVIALLFVSFMIWQAWEQD). A disordered region spans residues 28 to 55 (NPQPQAQQTTQTTTTAAGSAADQGVPAS). Low complexity predominate over residues 30-50 (QPQAQQTTQTTTTAAGSAADQ). Transmembrane regions (helical) follow at residues 350-370 (FVGN…GIMY), 420-440 (LGGC…YYML), 458-478 (LSAQ…MFFI), and 499-519 (PVIF…YYIV).

It belongs to the OXA1/ALB3/YidC family. Type 1 subfamily. Interacts with the Sec translocase complex via SecD. Specifically interacts with transmembrane segments of nascent integral membrane proteins during membrane integration.

The protein resides in the cell inner membrane. In terms of biological role, required for the insertion and/or proper folding and/or complex formation of integral membrane proteins into the membrane. Involved in integration of membrane proteins that insert both dependently and independently of the Sec translocase complex, as well as at least some lipoproteins. Aids folding of multispanning membrane proteins. The protein is Membrane protein insertase YidC of Escherichia coli O139:H28 (strain E24377A / ETEC).